The primary structure comprises 338 residues: 1-aminocyclopropane-1-carboxylate deaminase (338 aa).

N6-(pyridoxal phosphate)lysine is present on lysine 51. The active-site Nucleophile is the serine 78.

This sequence belongs to the ACC deaminase/D-cysteine desulfhydrase family. In terms of assembly, homotrimer. Pyridoxal 5'-phosphate is required as a cofactor.

It carries out the reaction 1-aminocyclopropane-1-carboxylate + H2O = 2-oxobutanoate + NH4(+). In terms of biological role, catalyzes a cyclopropane ring-opening reaction, the irreversible conversion of 1-aminocyclopropane-1-carboxylate (ACC) to ammonia and alpha-ketobutyrate. Allows growth on ACC as a nitrogen source. In Pseudomonas sp. (strain ACP), this protein is 1-aminocyclopropane-1-carboxylate deaminase.